Consider the following 581-residue polypeptide: Protein FAM83D (581 aa).

The tract at residues 1–297 is DUF1669; the sequence is MALRYDGLDE…LYAQSKPISS (297 aa). Residues 75-101 form a disordered region; that stretch reads PGEEGAAAGAEDSFGSSHDCSSGTYFP. Residues 88–98 are compositionally biased toward polar residues; sequence FGSSHDCSSGT. Ser296 carries the phosphoserine modification. Residues 338–581 are required for interaction with KIF22 and function in chromosome congression; that stretch reads TPRKVELGGE…REIMLYPSYQ (244 aa). 2 disordered regions span residues 366–401 and 426–503; these read EDYF…MSDV and QTVV…GPPK. The segment covering 369–382 has biased composition (basic and acidic residues); it reads FSSRKDRLEGRRVT. A compositionally biased stretch (low complexity) spans 426 to 438; it reads QTVVPTTSATTQT. Ser456 carries the post-translational modification Phosphoserine. Positions 462–488 are enriched in low complexity; that stretch reads SVSRSSSLRSSSSLSSQGSVASSIGSQ. Thr507 is subject to Phosphothreonine.

The protein belongs to the FAM83 family. In terms of assembly, interacts with FBXW7; promotes FBXW7 degradation. May interact with RAF1. Interacts with KIF22; recruits KIF22 to mitotic spindle microtubules. Interacts (via C-terminus) with DYNLL1. Interacts with HMMR. Directly interacts (via DUF1669) with CSNK1A1 and CSNK1A1L. Post-translationally, phosphorylated during mitosis.

It localises to the cytoplasm. The protein localises to the cytoskeleton. Its subcellular location is the spindle. It is found in the spindle pole. Through the degradation of FBXW7, may act indirectly on the expression and downstream signaling of MTOR, JUN and MYC. May play also a role in cell proliferation through activation of the ERK1/ERK2 signaling cascade. May also be important for proper chromosome congression and alignment during mitosis through its interaction with KIF22. The polypeptide is Protein FAM83D (Bos taurus (Bovine)).